Here is a 219-residue protein sequence, read N- to C-terminus: Ribosomal RNA small subunit methyltransferase I (219 aa).

It belongs to the methyltransferase superfamily. RsmI family.

The protein localises to the cytoplasm. The enzyme catalyses cytidine(1402) in 16S rRNA + S-adenosyl-L-methionine = 2'-O-methylcytidine(1402) in 16S rRNA + S-adenosyl-L-homocysteine + H(+). Functionally, catalyzes the 2'-O-methylation of the ribose of cytidine 1402 (C1402) in 16S rRNA. In Coprothermobacter proteolyticus (strain ATCC 35245 / DSM 5265 / OCM 4 / BT), this protein is Ribosomal RNA small subunit methyltransferase I.